Consider the following 137-residue polypeptide: Large ribosomal subunit protein uL16 (137 aa).

It belongs to the universal ribosomal protein uL16 family. In terms of assembly, part of the 50S ribosomal subunit.

Binds 23S rRNA and is also seen to make contacts with the A and possibly P site tRNAs. This Allorhizobium ampelinum (strain ATCC BAA-846 / DSM 112012 / S4) (Agrobacterium vitis (strain S4)) protein is Large ribosomal subunit protein uL16.